The chain runs to 498 residues: ATP synthase subunit beta, chloroplastic (498 aa).

ATP is bound at residue G172–T179.

This sequence belongs to the ATPase alpha/beta chains family. In terms of assembly, F-type ATPases have 2 components, CF(1) - the catalytic core - and CF(0) - the membrane proton channel. CF(1) has five subunits: alpha(3), beta(3), gamma(1), delta(1), epsilon(1). CF(0) has four main subunits: a(1), b(1), b'(1) and c(9-12).

The protein resides in the plastid. It is found in the chloroplast thylakoid membrane. The catalysed reaction is ATP + H2O + 4 H(+)(in) = ADP + phosphate + 5 H(+)(out). In terms of biological role, produces ATP from ADP in the presence of a proton gradient across the membrane. The catalytic sites are hosted primarily by the beta subunits. The polypeptide is ATP synthase subunit beta, chloroplastic (Populus tremuloides (Quaking aspen)).